We begin with the raw amino-acid sequence, 817 residues long: MYNTRRSAYMNSCSTAMELPPQSLHQNWQDTEYVNTTCSSDMNSDMSMYNDDKDDPFYEDEGSGGGTSGGGKKSSRKRANTTSSSGGNEKESKRTANKVCRVCGDKAFSYNFNVITCESCKAFFRRNANKEKEIRCPFNEQCEINMVSRRFCQRCRLTKCFAVGMKKEWIMSEEARLEKKQRVEENRERRLQDAMNRALEEACMEDESENSYDEAPAPSHQMSVRQYLANDDAPHKSSDEVQPHLGHHGYNQKEDKMMNFYQDGPSDQGDYSLPSNSCASSSQLDTSVNCGATTIADNGASPSNTVTIPAAVDVERKPIPTNVLFSASMSAIQDVAAIISNAETKNLGMCAPDVVNENLMNVAQAAVQAQAIVNHTQQLAAAVVAQQVVSNMAPVMPTVNPLDPLLAPAFIAPPMPTPINVPITTPIAGALSTPLPPPIVPPGHSSINPVIPIIPKEMPVSVSLLNQLEQTPAEMVTVPKDMLMKLIQKNSRSTCTCSCMCGRYPPGSCIVDEVTKDLLNGGSSNSSNATDRDETRLETTEDMQMNGLLPGDCNSSIQWLNQQSSAQAFVDPITHSMTAEEAQTQRERRDSIFGSFSAADQGTVTQPKSVQEETIWEHTVAENESRELSDEEIEKMEELTEISNQWISMRLDSMPILDLFSKKNVEKIVNGLKLLSSFRFLPQVDKRSVVKRGLFNYCVVKWMQHKESMSIDGLSDAARRDFMNIIRREEFNYRVQPGAFNTLAISVLFHSISDNLISTDVYMEHLVFKKLLDKNLPIKVSSDTVYNNYYPYIIKAAKHLEKATKGLSDELVAHAVS.

The disordered stretch occupies residues 49–91; the sequence is YNDDKDDPFYEDEGSGGGTSGGGKKSSRKRANTTSSSGGNEKE. The span at 52–62 shows a compositional bias: acidic residues; the sequence is DKDDPFYEDEG. Residues 63-72 show a composition bias toward gly residues; it reads SGGGTSGGGK. A DNA-binding region (nuclear receptor) is located at residues 97-172; the sequence is NKVCRVCGDK…VGMKKEWIMS (76 aa). 2 consecutive NR C4-type zinc fingers follow at residues 100–120 and 136–155; these read CRVC…CESC and CPFN…CQRC. Acidic residues predominate over residues 202-212; sequence ACMEDESENSY. Disordered regions lie at residues 202–221 and 258–284; these read ACME…PSHQ and MNFY…SSQL. Residues 273 to 284 show a composition bias toward polar residues; the sequence is LPSNSCASSSQL.

It belongs to the nuclear hormone receptor family.

It localises to the nucleus. Functionally, orphan nuclear receptor. This is Nuclear hormone receptor family member nhr-48 (nhr-48) from Caenorhabditis elegans.